A 149-amino-acid chain; its full sequence is D-aminoacyl-tRNA deacylase (149 aa).

The Gly-cisPro motif, important for rejection of L-amino acids signature appears at 137 to 138 (GP).

This sequence belongs to the DTD family. As to quaternary structure, homodimer.

It is found in the cytoplasm. It catalyses the reaction glycyl-tRNA(Ala) + H2O = tRNA(Ala) + glycine + H(+). The catalysed reaction is a D-aminoacyl-tRNA + H2O = a tRNA + a D-alpha-amino acid + H(+). In terms of biological role, an aminoacyl-tRNA editing enzyme that deacylates mischarged D-aminoacyl-tRNAs. Also deacylates mischarged glycyl-tRNA(Ala), protecting cells against glycine mischarging by AlaRS. Acts via tRNA-based rather than protein-based catalysis; rejects L-amino acids rather than detecting D-amino acids in the active site. By recycling D-aminoacyl-tRNA to D-amino acids and free tRNA molecules, this enzyme counteracts the toxicity associated with the formation of D-aminoacyl-tRNA entities in vivo and helps enforce protein L-homochirality. In Desulfitobacterium hafniense (strain DSM 10664 / DCB-2), this protein is D-aminoacyl-tRNA deacylase.